The following is a 140-amino-acid chain: Holo-[acyl-carrier-protein] synthase (140 aa).

Residues Asp8 and Glu62 each contribute to the Mg(2+) site.

The protein belongs to the P-Pant transferase superfamily. AcpS family. The cofactor is Mg(2+).

The protein resides in the cytoplasm. It carries out the reaction apo-[ACP] + CoA = holo-[ACP] + adenosine 3',5'-bisphosphate + H(+). Functionally, transfers the 4'-phosphopantetheine moiety from coenzyme A to a Ser of acyl-carrier-protein. The sequence is that of Holo-[acyl-carrier-protein] synthase from Cupriavidus taiwanensis (strain DSM 17343 / BCRC 17206 / CCUG 44338 / CIP 107171 / LMG 19424 / R1) (Ralstonia taiwanensis (strain LMG 19424)).